The primary structure comprises 207 residues: LexA repressor (207 aa).

A DNA-binding region (H-T-H motif) is located at residues 28 to 48 (RAEIAQKLGFKSANAAEEHLK). Active-site for autocatalytic cleavage activity residues include Ser124 and Lys161.

This sequence belongs to the peptidase S24 family. In terms of assembly, homodimer.

The catalysed reaction is Hydrolysis of Ala-|-Gly bond in repressor LexA.. Functionally, represses a number of genes involved in the response to DNA damage (SOS response), including recA and lexA. In the presence of single-stranded DNA, RecA interacts with LexA causing an autocatalytic cleavage which disrupts the DNA-binding part of LexA, leading to derepression of the SOS regulon and eventually DNA repair. In Aeromonas salmonicida (strain A449), this protein is LexA repressor.